Consider the following 400-residue polypeptide: Large envelope protein (400 aa).

2 disordered regions span residues 1–50 and 84–116; these read MGGW…PHKD and ILTS…RDTH. Gly-2 carries the N-myristoyl glycine; by host lipid modification. Positions 2-119 are pre-S1; sequence GGWSSKPRKG…PPLRDTHPQA (118 aa). Positions 2–174 are pre-S; sequence GGWSSKPRKG…LSTTGDPVPN (173 aa). At 2–181 the chain is on the virion surface; in external conformation side; that stretch reads GGWSSKPRKG…VPNMENIASG (180 aa). The Intravirion; in internal conformation portion of the chain corresponds to 2–253; the sequence is GGWSSKPRKG…PGYRWMCLRR (252 aa). Residues 96–106 are compositionally biased toward polar residues; it reads STNRQSGRQPT. The pre-S2 stretch occupies residues 120 to 174; the sequence is VQWNSTTFHQTLQDPRVRALYLPAGGSSSGTVSPAQNTVSAISSILSTTGDPVPN. Residues 182-202 traverse the membrane as a helical segment; that stretch reads LLGPLLVLQAGFFSLTKILTI. The Intravirion; in external conformation segment spans residues 203 to 253; it reads PQSLDSWWTSLNFLGGTPVCLGQNSQSQISSHSPTCCPPICPGYRWMCLRR. A helical membrane pass occupies residues 254-274; that stretch reads FIIFLCILLLCLIFLLVLLDY. The Virion surface segment spans residues 275-348; it reads QGMLPVCPLI…WASVRFSWLS (74 aa). Residue Asn-320 is glycosylated (N-linked (GlcNAc...) asparagine; by host). A helical membrane pass occupies residues 349–369; it reads LLVPFVQWFVGLSPTVWLSVI. At 370 to 375 the chain is on the intravirion side; that stretch reads WMMWFW. A helical transmembrane segment spans residues 376–398; that stretch reads GPSLYNILSPFMPLLPIFLCLWV. Over 399 to 400 the chain is Virion surface; sequence YM.

It belongs to the orthohepadnavirus major surface antigen family. Li-HBsAg interacts with capsid protein and with HDV Large delta antigen. Isoform M associates with host chaperone CANX through its pre-S2 N glycan. This association may be essential for M proper secretion. Interacts (via its myristoylated pre-S1 region) with the host SLC10A1/NTCP; this interaction is essential for viral entry. Isoform M is N-terminally acetylated by host at a ratio of 90%, and N-glycosylated by host at the pre-S2 region. In terms of processing, myristoylated; this modification is essential for its interaction with the host protein SLC10A1/NTCP.

Its subcellular location is the virion membrane. Functionally, the large envelope protein exists in two topological conformations, one which is termed 'external' or Le-HBsAg and the other 'internal' or Li-HBsAg. In its external conformation the protein attaches the virus to cell receptors and thereby initiating infection. This interaction determines the species specificity and liver tropism. This attachment induces virion internalization predominantly through caveolin-mediated endocytosis. The large envelope protein also assures fusion between virion membrane and endosomal membrane. In its internal conformation the protein plays a role in virion morphogenesis and mediates the contact with the nucleocapsid like a matrix protein. Its function is as follows. The middle envelope protein plays an important role in the budding of the virion. It is involved in the induction of budding in a nucleocapsid independent way. In this process the majority of envelope proteins bud to form subviral lipoprotein particles of 22 nm of diameter that do not contain a nucleocapsid. This Homo sapiens (Human) protein is Large envelope protein.